Reading from the N-terminus, the 718-residue chain is Auxin response factor 2 (718 aa).

The interval 1–24 (MVGIDLNTVEEEEDEEEGGATGTV) is disordered. Over residues 8 to 18 (TVEEEEDEEEG) the composition is skewed to acidic residues. Positions 147–249 (FCKTLTASDT…ELRLGVRRAA (103 aa)) form a DNA-binding region, TF-B3.

The protein belongs to the ARF family. In terms of assembly, homo and heterodimers. In terms of tissue distribution, expressed in roots, culms, leaves and young panicles.

Its subcellular location is the nucleus. Its function is as follows. Auxin response factors (ARFs) are transcriptional factors that bind specifically to the DNA sequence 5'-TGTCTC-3' found in the auxin-responsive promoter elements (AuxREs). In Oryza sativa subsp. japonica (Rice), this protein is Auxin response factor 2 (ARF2).